The sequence spans 449 residues: UDP-glycosyltransferase 76E6 (449 aa).

Residues serine 274, 333–335, 350–358, and 372–375 each bind UDP-alpha-D-glucose; these read APQ, HCGWNSTLE, and HGEQ.

It belongs to the UDP-glycosyltransferase family.

This chain is UDP-glycosyltransferase 76E6 (UGT76E6), found in Arabidopsis thaliana (Mouse-ear cress).